The following is a 206-amino-acid chain: dITP/XTP pyrophosphatase (206 aa).

7-12 (SRNPKK) is a substrate binding site. Asp72 serves as the catalytic Proton acceptor. Asp72 contacts Mg(2+). Substrate-binding positions include Ser73, 155-158 (FGYD), Lys178, and 183-184 (HR).

Belongs to the HAM1 NTPase family. In terms of assembly, homodimer. The cofactor is Mg(2+).

The catalysed reaction is XTP + H2O = XMP + diphosphate + H(+). It carries out the reaction dITP + H2O = dIMP + diphosphate + H(+). The enzyme catalyses ITP + H2O = IMP + diphosphate + H(+). Functionally, pyrophosphatase that catalyzes the hydrolysis of nucleoside triphosphates to their monophosphate derivatives, with a high preference for the non-canonical purine nucleotides XTP (xanthosine triphosphate), dITP (deoxyinosine triphosphate) and ITP. Seems to function as a house-cleaning enzyme that removes non-canonical purine nucleotides from the nucleotide pool, thus preventing their incorporation into DNA/RNA and avoiding chromosomal lesions. The protein is dITP/XTP pyrophosphatase of Mycobacteroides abscessus (strain ATCC 19977 / DSM 44196 / CCUG 20993 / CIP 104536 / JCM 13569 / NCTC 13031 / TMC 1543 / L948) (Mycobacterium abscessus).